Consider the following 338-residue polypeptide: MTKQTIAILGPGSWGTALGQVLNDNGHTVRIWGNVPEQIDEINKEHTNKRYFKDVILDENIKGYKDLSEALDGVDAVLFVVPTKVTRLVAKQVAQALKHKVVVMHASKGLEPDSHKRLSEVLEEEIPAELRSEIVVVSGPSHAEETIVRDLTLISAASKDLETASYVQNLFSNHYFRLYTNNDVIGVETAGALKNIIAVGAGALHGLGYGDNAKAAIIARGLTEITRLGVAMGANPLTYSGLSGVGDLIVTGTSVHSRNWRAGDQLGRGEKLEDVERNMGMVIEGISTTKAAYELAQELGVYMPITQAIYKVIYQGAGIEDAIKEIMTGEFRHENEWH.

3 residues coordinate NADPH: serine 13, tryptophan 14, and lysine 108. Residues lysine 108, glycine 139, and serine 141 each contribute to the sn-glycerol 3-phosphate site. Alanine 143 contacts NADPH. 5 residues coordinate sn-glycerol 3-phosphate: lysine 194, aspartate 247, serine 257, arginine 258, and asparagine 259. Lysine 194 functions as the Proton acceptor in the catalytic mechanism. An NADPH-binding site is contributed by arginine 258. Valine 282 and glutamate 284 together coordinate NADPH.

Belongs to the NAD-dependent glycerol-3-phosphate dehydrogenase family.

Its subcellular location is the cytoplasm. The enzyme catalyses sn-glycerol 3-phosphate + NAD(+) = dihydroxyacetone phosphate + NADH + H(+). The catalysed reaction is sn-glycerol 3-phosphate + NADP(+) = dihydroxyacetone phosphate + NADPH + H(+). The protein operates within membrane lipid metabolism; glycerophospholipid metabolism. Its function is as follows. Catalyzes the reduction of the glycolytic intermediate dihydroxyacetone phosphate (DHAP) to sn-glycerol 3-phosphate (G3P), the key precursor for phospholipid synthesis. In Streptococcus suis (strain 98HAH33), this protein is Glycerol-3-phosphate dehydrogenase [NAD(P)+].